A 78-amino-acid polypeptide reads, in one-letter code: Large ribosomal subunit protein bL28 (78 aa).

This sequence belongs to the bacterial ribosomal protein bL28 family.

This is Large ribosomal subunit protein bL28 from Prochlorococcus marinus (strain MIT 9215).